Consider the following 427-residue polypeptide: Gamma-glutamyl phosphate reductase (427 aa).

Belongs to the gamma-glutamyl phosphate reductase family.

The protein resides in the cytoplasm. The enzyme catalyses L-glutamate 5-semialdehyde + phosphate + NADP(+) = L-glutamyl 5-phosphate + NADPH + H(+). It functions in the pathway amino-acid biosynthesis; L-proline biosynthesis; L-glutamate 5-semialdehyde from L-glutamate: step 2/2. Catalyzes the NADPH-dependent reduction of L-glutamate 5-phosphate into L-glutamate 5-semialdehyde and phosphate. The product spontaneously undergoes cyclization to form 1-pyrroline-5-carboxylate. The sequence is that of Gamma-glutamyl phosphate reductase from Bifidobacterium adolescentis (strain ATCC 15703 / DSM 20083 / NCTC 11814 / E194a).